A 210-amino-acid polypeptide reads, in one-letter code: Uridine kinase (210 aa).

13-20 (GGSGSGKT) is an ATP binding site.

The protein belongs to the uridine kinase family.

The protein resides in the cytoplasm. The catalysed reaction is uridine + ATP = UMP + ADP + H(+). It catalyses the reaction cytidine + ATP = CMP + ADP + H(+). Its pathway is pyrimidine metabolism; CTP biosynthesis via salvage pathway; CTP from cytidine: step 1/3. It participates in pyrimidine metabolism; UMP biosynthesis via salvage pathway; UMP from uridine: step 1/1. The sequence is that of Uridine kinase from Oceanobacillus iheyensis (strain DSM 14371 / CIP 107618 / JCM 11309 / KCTC 3954 / HTE831).